The sequence spans 1960 residues: Myosin-9 (1960 aa).

Position 2 is an N-acetylalanine (Ala2). The tract at residues 2–838 (AQQAADKYLY…RLFTKVKPLL (837 aa)) is mediates interaction with LIMCH1. N6-acetyllysine is present on Lys8. The residue at position 11 (Tyr11) is a Phosphotyrosine. Positions 27–77 (AAKKLVWVPSSKNGFEPASLKEEVGEEAIVELVENGKKVKVNKDDIQKMNP) constitute a Myosin N-terminal SH3-like domain. One can recognise a Myosin motor domain in the interval 81-776 (SKVEDMAELT…VLAHLEEERD (696 aa)). Lys102 is modified (N6-acetyllysine). 174-181 (GESGAGKT) is an ATP binding site. An N6-acetyllysine mark is found at Lys299, Lys435, and Lys613. The residue at position 628 (Ser628) is a Phosphoserine. The segment at 654–676 (LAKLMATLRNTNPNFVRCIIPNH) is actin-binding. Phosphotyrosine is present on Tyr754. An IQ domain is found at 779–808 (ITDVIIGFQACCRGYLARKAFAKRQQQLTA). The stretch at 841–1926 (IRHEDELLAK…LKNKLRRGDL (1086 aa)) forms a coiled coil. At Lys850 the chain carries N6-succinyllysine. N6-acetyllysine occurs at positions 860, 975, and 1024. Basic and acidic residues predominate over residues 1035–1055 (RLRREEKQRQELEKTRRKLEG). Residues 1035-1057 (RLRREEKQRQELEKTRRKLEGDS) are disordered. A Phosphoserine modification is found at Ser1114. The disordered stretch occupies residues 1117–1167 (QEDLESERASRNKAEKQKRDLGEELEALKTELEDTLDSTAAQQELRSKREQ). Residues 1122 to 1148 (SERASRNKAEKQKRDLGEELEALKTEL) are compositionally biased toward basic and acidic residues. Residues Lys1234 and Lys1249 each carry the N6-acetyllysine modification. The segment at 1327 to 1352 (LSTKLKQMEDEKNSFREQLEEEEEAK) is disordered. Basic and acidic residues predominate over residues 1332–1352 (KQMEDEKNSFREQLEEEEEAK). N6-acetyllysine occurs at positions 1357, 1392, 1404, 1410, 1459, and 1638. Lys1669 carries the post-translational modification N6-succinyllysine. Ser1714 is modified (phosphoserine). Residues 1768 to 1788 (LERSHAQKNENARQQLERQNK) are disordered. 3 positions are modified to N6-acetyllysine: Lys1793, Lys1802, and Lys1845. The segment at 1877–1908 (RQLEEAEEEAQRANASRRKLQRELEDATETAD) is disordered. Position 1923 is an omega-N-methylarginine (Arg1923). Position 1939 is a phosphothreonine (Thr1939). The disordered stretch occupies residues 1939 to 1960 (TGDCSDEEVDGKADGADAKAAE). Ser1943 is modified (phosphoserine). The segment covering 1948–1960 (DGKADGADAKAAE) has biased composition (basic and acidic residues).

Belongs to the TRAFAC class myosin-kinesin ATPase superfamily. Myosin family. As to quaternary structure, myosin is a hexameric protein that consists of 2 heavy chain subunits (MHC), 2 alkali light chain subunits (MLC) and 2 regulatory light chain subunits (MLC-2). Interacts with RASIP1. Interacts with DDR1. Interacts with PDLIM2. Interacts with SVIL. Interacts with HTRA3. Interacts with Myo7a. Interacts with CFAP95. Interacts with LIMCH1; independently of the integration of MYH9 into the myosin complex. Interacts with RAB3A. Interacts with ZBED4. Interacts with S100A4; this interaction increases cell motility. Post-translationally, ISGylated. In terms of processing, ubiquitination.

Its subcellular location is the cytoplasm. The protein localises to the cytoskeleton. The protein resides in the cell cortex. It is found in the cytoplasmic vesicle. It localises to the secretory vesicle. Its subcellular location is the cortical granule. Functionally, cellular myosin that appears to play a role in cytokinesis, cell shape, and specialized functions such as secretion and capping. Required for cortical actin clearance prior to oocyte exocytosis. Promotes cell motility in conjunction with S100A4. During cell spreading, plays an important role in cytoskeleton reorganization, focal contact formation (in the margins but not the central part of spreading cells), and lamellipodial retraction; this function is mechanically antagonized by MYH10. The chain is Myosin-9 (Myh9) from Mus musculus (Mouse).